Consider the following 296-residue polypeptide: uncharacterized protein (296 aa).

10 consecutive transmembrane segments (helical) span residues 8–28 (LFVL…ALAP), 34–54 (LAFG…AVWI), 63–83 (WAWP…PLFF), 89–109 (TGIA…AGTL), 121–141 (SWWI…SDSS), 147–167 (VAGV…TLIS), 183–203 (VFMI…ISWI), 208–228 (GLGT…FLFA), 238–258 (AAVT…VFFI), and 261–281 (MLSP…LVIS). 2 EamA domains span residues 15 to 138 (FFWG…LLFS) and 158 to 282 (ASFA…VISA).

It belongs to the EamA transporter family.

Its subcellular location is the cell membrane. This is an uncharacterized protein from Bacillus subtilis (strain 168).